Consider the following 1114-residue polypeptide: OTU domain-containing protein 4 (1114 aa).

Residue Met1 is modified to N-acetylmethionine. The interval 1 to 22 is disordered; the sequence is MEAAVGVPDGGDQGGAGPREDA. Positions 8–17 are enriched in gly residues; it reads PDGGDQGGAG. An OTU domain is found at 34–155; sequence LYRKLVAKDG…GNHYDIVYPI (122 aa). The interval 39 to 45 is cys-loop; sequence VAKDGSC. Residue Asp42 is part of the active site. The Nucleophile role is filled by Cys45. The variable-loop stretch occupies residues 94–104; it reads LENPQEWVGQV. The residue at position 120 (Tyr120) is a Phosphotyrosine. A phosphoserine mark is found at Ser126 and Ser128. The residue at position 131 (Thr131) is a Phosphothreonine. Positions 143–148 are his-loop; that stretch reads FSNGNH. The active site involves His148. A phosphoserine mark is found at Ser166, Ser199, Ser202, Ser204, and Ser341. Positions 323-449 are disordered; that stretch reads KHTSKNLKAP…FGLSPEERRE (127 aa). Residues 392–404 show a composition bias toward low complexity; it reads FSSHSSGSQSQKF. Residues 420 to 435 show a composition bias toward basic and acidic residues; sequence RKPDRERVEDFDHTSR. Phosphotyrosine is present on Tyr439. Ser443 is modified (phosphoserine). Tyr460 bears the Phosphotyrosine mark. The tract at residues 472 to 567 is disordered; it reads ALSSSSVNQS…PAEQKPAEHV (96 aa). Low complexity predominate over residues 474 to 487; the sequence is SSSSVNQSASQSSN. A compositionally biased stretch (basic and acidic residues) spans 496 to 529; the sequence is HVGDRKGSRRRMDTEERKDKDSIHGHSQLDKRPE. 3 positions are modified to phosphoserine: Ser546, Ser893, and Ser900. The interval 911–1114 is disordered; the sequence is EFPEARGEHV…MGDGHRGQHT (204 aa). 2 stretches are compositionally biased toward basic and acidic residues: residues 913–922 and 969–1000; these read PEARGEHVHS and NRER…DPKT. Phosphoserine occurs at positions 1006, 1011, 1014, 1023, and 1024. The span at 1039 to 1048 shows a compositional bias: polar residues; it reads SKQFYNQTYG. Residue Ser1049 is modified to Phosphoserine. Basic and acidic residues-rich tracts occupy residues 1067 to 1086 and 1096 to 1114; these read VRSE…EGYQ and FRGD…GQHT.

In terms of assembly, interacts with MYD88; the interaction is direct. Interacts with ALKBH3; the interaction is direct. Interacts with USP7; the interaction is direct. Interacts with USP9X; the interaction is direct. In terms of processing, phosphorylated on Ser-202 and Ser-204 likely by CSNK2A1-CSNK2A2 serine/threonine-protein kinase complex. Activates 'Lys-63'-specific deubiquitinase activity.

It localises to the cytoplasm. The protein localises to the nucleus. It catalyses the reaction Thiol-dependent hydrolysis of ester, thioester, amide, peptide and isopeptide bonds formed by the C-terminal Gly of ubiquitin (a 76-residue protein attached to proteins as an intracellular targeting signal).. With respect to regulation, phosphorylation on Ser-202 and Ser-204 induces 'Lys-63'-specific deubiquitinase activity. Deubiquitinase which hydrolyzes the isopeptide bond between the ubiquitin C-terminus and the lysine epsilon-amino group of the target protein. May negatively regulate inflammatory and pathogen recognition signaling in innate immune response. Upon phosphorylation at Ser-202 and Ser-204 residues, via IL-1 receptor and Toll-like receptor signaling pathway, specifically deubiquitinates 'Lys-63'-polyubiquitinated MYD88 adapter protein triggering down-regulation of NF-kappa-B-dependent transcription of inflammatory mediators. Independently of the catalytic activity, acts as a scaffold for alternative deubiquitinases to assemble specific deubiquitinase-substrate complexes. Associates with USP7 and USP9X deubiquitinases to stabilize alkylation repair enzyme ALKBH3, thereby promoting the repair of alkylated DNA lesions. This is OTU domain-containing protein 4 from Homo sapiens (Human).